We begin with the raw amino-acid sequence, 762 residues long: ABC-type oligopeptide transporter ABCB9 (762 aa).

The next 8 helical transmembrane spans lie at 7–27 (VVVT…IYAF), 47–67 (VLDL…ATIG), 84–104 (LVIT…LLLF), 116–136 (FWAL…LWGL), 181–201 (VAFL…ETFL), 221–241 (FTTA…AAGI), 315–335 (VFMF…FPII), and 412–432 (SGLT…HLVI). An ABC transmembrane type-1 domain is found at 184–467 (LVAASFFLIV…VGSVYSGLMQ (284 aa)). In terms of domain architecture, ABC transporter spans 500–736 (VDFENVTFTY…GGLYAKLVQR (237 aa)). 535–542 (GPSGSGKS) contributes to the ATP binding site.

Belongs to the ABC transporter superfamily. ABCB family. MHC peptide exporter (TC 3.A.1.209) subfamily. In terms of assembly, homodimer. Interacts (via TMD0 region) with LAMP1; this interaction strongly stabilizes ABCB9 and protects ABCB9 against lysosomal degradation. Interacts (via TMD0 region) with LAMP2 (isoform LAMP-2B). Interacts (via TMD0) with YIF1B; this interaction allows (but is not essential) the ER-to-Golgi trafficking and strongly depends on a salt bridge within TMD0. In terms of tissue distribution, highly expressed in testis, particularly in the Sertoli cells of the seminiferous tubules, and at moderate levels in brain and spinal cord.

Its subcellular location is the lysosome membrane. The enzyme catalyses a [oligopeptide](in) + ATP + H2O = a [oligopeptide](out) + ADP + phosphate + H(+). Functionally, ATP-dependent low-affinity peptide transporter which translocates a broad spectrum of peptides from the cytosol to the lysosomal lumen for degradation. Displays a broad peptide length specificity from 6-mer up to at least 59-mer peptides with an optimum of 23-mers. Binds and transports smaller and larger peptides with the same affinity. Favors positively charged, aromatic or hydrophobic residues in the N- and C-terminal positions whereas negatively charged residues as well as asparagine and methionine are not favored. The chain is ABC-type oligopeptide transporter ABCB9 from Mus musculus (Mouse).